The chain runs to 432 residues: Probable exopolygalacturonase X (432 aa).

The first 23 residues, 1–23 (MKFSYSFVQVVSLLLSLSPSVEG), serve as a signal peptide directing secretion. Asparagine 113, asparagine 129, and asparagine 199 each carry an N-linked (GlcNAc...) asparagine glycan. The stretch at 231-252 (SDNIVIQNSVINNGDDCVSFKP) is one PbH1 1 repeat. Aspartate 245 (proton donor) is an active-site residue. The cysteines at positions 247 and 264 are disulfide-linked. 2 N-linked (GlcNAc...) asparagine glycosylation sites follow: asparagine 253 and asparagine 265. PbH1 repeat units lie at residues 254–274 (STNI…SVGS), 285–306 (VQNV…RIKV), and 327–348 (VKNI…EVTQ). The active site involves histidine 268. N-linked (GlcNAc...) asparagine glycans are attached at residues asparagine 292, asparagine 297, asparagine 329, asparagine 354, and asparagine 364. The stretch at 362–394 (PSNLTISDIHFKNFRGTTSGKRDPDVGTIVCSS) is one PbH1 5 repeat. Cysteines 392 and 398 form a disulfide.

This sequence belongs to the glycosyl hydrolase 28 family.

Its subcellular location is the secreted. The enzyme catalyses [(1-&gt;4)-alpha-D-galacturonosyl](n) + H2O = alpha-D-galacturonate + [(1-&gt;4)-alpha-D-galacturonosyl](n-1). Functionally, specific in hydrolyzing the terminal glycosidic bond of polygalacturonic acid and oligogalacturonates. The chain is Probable exopolygalacturonase X (pgaX) from Neosartorya fischeri (strain ATCC 1020 / DSM 3700 / CBS 544.65 / FGSC A1164 / JCM 1740 / NRRL 181 / WB 181) (Aspergillus fischerianus).